Reading from the N-terminus, the 127-residue chain is Ribonuclease P protein component (127 aa).

Belongs to the RnpA family. As to quaternary structure, consists of a catalytic RNA component (M1 or rnpB) and a protein subunit.

It carries out the reaction Endonucleolytic cleavage of RNA, removing 5'-extranucleotides from tRNA precursor.. In terms of biological role, RNaseP catalyzes the removal of the 5'-leader sequence from pre-tRNA to produce the mature 5'-terminus. It can also cleave other RNA substrates such as 4.5S RNA. The protein component plays an auxiliary but essential role in vivo by binding to the 5'-leader sequence and broadening the substrate specificity of the ribozyme. The protein is Ribonuclease P protein component of Rippkaea orientalis (strain PCC 8801 / RF-1) (Cyanothece sp. (strain PCC 8801)).